The primary structure comprises 267 residues: Imidazole glycerol phosphate synthase subunit HisF (267 aa).

Active-site residues include Asp-21 and Asp-140.

It belongs to the HisA/HisF family. Heterodimer of HisH and HisF.

It is found in the cytoplasm. The enzyme catalyses 5-[(5-phospho-1-deoxy-D-ribulos-1-ylimino)methylamino]-1-(5-phospho-beta-D-ribosyl)imidazole-4-carboxamide + L-glutamine = D-erythro-1-(imidazol-4-yl)glycerol 3-phosphate + 5-amino-1-(5-phospho-beta-D-ribosyl)imidazole-4-carboxamide + L-glutamate + H(+). The protein operates within amino-acid biosynthesis; L-histidine biosynthesis; L-histidine from 5-phospho-alpha-D-ribose 1-diphosphate: step 5/9. IGPS catalyzes the conversion of PRFAR and glutamine to IGP, AICAR and glutamate. The HisF subunit catalyzes the cyclization activity that produces IGP and AICAR from PRFAR using the ammonia provided by the HisH subunit. The sequence is that of Imidazole glycerol phosphate synthase subunit HisF from Bordetella avium (strain 197N).